A 394-amino-acid chain; its full sequence is Ornithine aminotransferase 1 (394 aa).

K252 is subject to N6-(pyridoxal phosphate)lysine.

Belongs to the class-III pyridoxal-phosphate-dependent aminotransferase family. OAT subfamily. Pyridoxal 5'-phosphate is required as a cofactor.

The protein localises to the cytoplasm. It carries out the reaction a 2-oxocarboxylate + L-ornithine = L-glutamate 5-semialdehyde + an L-alpha-amino acid. The protein operates within amino-acid biosynthesis; L-proline biosynthesis; L-glutamate 5-semialdehyde from L-ornithine: step 1/1. Its function is as follows. Catalyzes the interconversion of ornithine to glutamate semialdehyde. The sequence is that of Ornithine aminotransferase 1 from Staphylococcus aureus (strain MRSA252).